A 644-amino-acid chain; its full sequence is Transcription factor btd (644 aa).

Disordered stretches follow at residues His-16–Gln-65 and Ala-101–Pro-196. 2 stretches are compositionally biased toward low complexity: residues Ala-101–Leu-119 and Ala-140–Pro-196. 3 C2H2-type zinc fingers span residues His-333–His-357, Phe-363–His-385, and Tyr-391–His-413. Disordered stretches follow at residues Leu-437–Thr-461 and Thr-478–Ala-537. Composition is skewed to low complexity over residues Thr-499–Ser-508 and Ala-521–Ala-537.

The protein resides in the nucleus. Its function is as follows. Required for the development of the antennal, intercalary and mandibular segments of the head. The polypeptide is Transcription factor btd (btd) (Drosophila melanogaster (Fruit fly)).